A 373-amino-acid polypeptide reads, in one-letter code: Cobalt-precorrin-5B C(1)-methyltransferase (373 aa).

Belongs to the CbiD family.

It catalyses the reaction Co-precorrin-5B + S-adenosyl-L-methionine = Co-precorrin-6A + S-adenosyl-L-homocysteine. It participates in cofactor biosynthesis; adenosylcobalamin biosynthesis; cob(II)yrinate a,c-diamide from sirohydrochlorin (anaerobic route): step 6/10. Its function is as follows. Catalyzes the methylation of C-1 in cobalt-precorrin-5B to form cobalt-precorrin-6A. This is Cobalt-precorrin-5B C(1)-methyltransferase from Polaromonas sp. (strain JS666 / ATCC BAA-500).